A 218-amino-acid chain; its full sequence is Small ribosomal subunit protein uS3c (218 aa).

Positions 47 to 118 constitute a KH type-2 domain; the sequence is VQKNMRIFSG…KLNIAITRIG (72 aa).

Belongs to the universal ribosomal protein uS3 family. In terms of assembly, part of the 30S ribosomal subunit.

It localises to the plastid. The protein localises to the chloroplast. The protein is Small ribosomal subunit protein uS3c (rps3) of Cucumis sativus (Cucumber).